Here is a 287-residue protein sequence, read N- to C-terminus: ATP synthase gamma chain (287 aa).

It belongs to the ATPase gamma chain family. F-type ATPases have 2 components, CF(1) - the catalytic core - and CF(0) - the membrane proton channel. CF(1) has five subunits: alpha(3), beta(3), gamma(1), delta(1), epsilon(1). CF(0) has three main subunits: a, b and c.

It localises to the cell inner membrane. Functionally, produces ATP from ADP in the presence of a proton gradient across the membrane. The gamma chain is believed to be important in regulating ATPase activity and the flow of protons through the CF(0) complex. This is ATP synthase gamma chain from Shigella boydii serotype 4 (strain Sb227).